Reading from the N-terminus, the 133-residue chain is Norrin (133 aa).

The N-terminal stretch at 1-24 is a signal peptide; that stretch reads MRKHVLAASFSMLSLLVIMGDTDS. 4 disulfides stabilise this stretch: Cys39-Cys96, Cys55-Cys110, Cys65-Cys126, and Cys69-Cys128. The region spanning 39 to 132 is the CTCK domain; the sequence is CMRHHYVDSI…ILSCHCEECN (94 aa).

In terms of assembly, homodimer; disulfide-linked. Component of a complex, at least composed of TSPAN12, FZD4, LRP5/6 and norrin (NDP). Binds FZD4 with high affinity. Interacts with LRP6 (via Beta-propellers 1 and 2). As to expression, expressed in the outer nuclear, inner nuclear and ganglion cell layers of the retina, and in fetal and adult brain.

The protein resides in the secreted. Functionally, activates the canonical Wnt signaling pathway through FZD4 and LRP5 coreceptor. Plays a central role in retinal vascularization by acting as a ligand for FZD4 that signals via stabilizing beta-catenin (CTNNB1) and activating LEF/TCF-mediated transcriptional programs. Acts in concert with TSPAN12 to activate FZD4 independently of the Wnt-dependent activation of FZD4, suggesting the existence of a Wnt-independent signaling that also promote accumulation the beta-catenin (CTNNB1). May be involved in a pathway that regulates neural cell differentiation and proliferation. Possible role in neuroectodermal cell-cell interaction. The polypeptide is Norrin (NDP) (Homo sapiens (Human)).